Here is a 360-residue protein sequence, read N- to C-terminus: 3-dehydroquinate synthase (360 aa).

NAD(+)-binding positions include 71 to 76 (DGEAHK), 105 to 109 (GVVGD), 129 to 130 (TT), Lys-142, and Lys-151. Zn(2+) is bound by residues Glu-184, His-247, and His-264.

This sequence belongs to the sugar phosphate cyclases superfamily. Dehydroquinate synthase family. Co(2+) is required as a cofactor. It depends on Zn(2+) as a cofactor. NAD(+) serves as cofactor.

The protein resides in the cytoplasm. The enzyme catalyses 7-phospho-2-dehydro-3-deoxy-D-arabino-heptonate = 3-dehydroquinate + phosphate. It functions in the pathway metabolic intermediate biosynthesis; chorismate biosynthesis; chorismate from D-erythrose 4-phosphate and phosphoenolpyruvate: step 2/7. Functionally, catalyzes the conversion of 3-deoxy-D-arabino-heptulosonate 7-phosphate (DAHP) to dehydroquinate (DHQ). The polypeptide is 3-dehydroquinate synthase (Azoarcus sp. (strain BH72)).